The following is a 320-amino-acid chain: Probable cell division protein WhiA (320 aa).

Residues 276 to 310 (TLKELGEMVAGGKISKSGINHRLRKIDEIAERLRA) constitute a DNA-binding region (H-T-H motif).

Belongs to the WhiA family.

Involved in cell division and chromosome segregation. This is Probable cell division protein WhiA from Geobacillus thermodenitrificans (strain NG80-2).